We begin with the raw amino-acid sequence, 113 residues long: U11-theraphotoxin-Hhn1a (113 aa).

Positions 1-21 are cleaved as a signal peptide; that stretch reads MNTVRVTFLLVFVLAVSLGQA. Residues 22–74 constitute a propeptide that is removed on maturation; it reads DKDENRMEMQEKTEQGESYLDFAENLLLQKLEELEAKLLEEDSEESRNSRQKR. Disulfide bonds link cysteine 75/cysteine 90, cysteine 82/cysteine 95, and cysteine 89/cysteine 110.

This sequence belongs to the neurotoxin 14 (magi-1) family. 01 (HNTX-16) subfamily. As to expression, expressed by the venom gland.

Its subcellular location is the secreted. Its function is as follows. Probable ion channel inhibitor. The chain is U11-theraphotoxin-Hhn1a from Cyriopagopus hainanus (Chinese bird spider).